The following is a 260-amino-acid chain: Multiple myeloma tumor-associated protein 2 homolog (260 aa).

The span at 1-11 (MFGSNRGGVRG) shows a compositional bias: gly residues. The tract at residues 1–21 (MFGSNRGGVRGGQDQFNWEDV) is disordered. Residues K22, K104, and K113 each participate in a glycyl lysine isopeptide (Lys-Gly) (interchain with G-Cter in SUMO2) cross-link. The span at 106 to 116 (EGGDPEEKGVD) shows a compositional bias: basic and acidic residues. 2 disordered regions span residues 106–133 (EGGD…RVAL) and 146–260 (SVFT…SSDD). Positions 117–132 (RLLGLGSASGSAGRVA) are enriched in low complexity. A phosphoserine mark is found at S123 and S127. Residues 170–182 (RAEDKVEPDAESH) are compositionally biased toward basic and acidic residues. The segment covering 183–206 (KKSKKEKKKKKKKHKKHKKKKDKE) has biased composition (basic residues). Phosphoserine is present on residues S215, S216, and S219.

The polypeptide is Multiple myeloma tumor-associated protein 2 homolog (Mmtag2) (Mus musculus (Mouse)).